The sequence spans 211 residues: Probable nicotinate-nucleotide adenylyltransferase (211 aa).

Belongs to the NadD family.

The catalysed reaction is nicotinate beta-D-ribonucleotide + ATP + H(+) = deamido-NAD(+) + diphosphate. It functions in the pathway cofactor biosynthesis; NAD(+) biosynthesis; deamido-NAD(+) from nicotinate D-ribonucleotide: step 1/1. In terms of biological role, catalyzes the reversible adenylation of nicotinate mononucleotide (NaMN) to nicotinic acid adenine dinucleotide (NaAD). The sequence is that of Probable nicotinate-nucleotide adenylyltransferase from Cellvibrio japonicus (strain Ueda107) (Pseudomonas fluorescens subsp. cellulosa).